Consider the following 397-residue polypeptide: uncharacterized protein (397 aa).

This sequence belongs to the ROK (NagC/XylR) family.

This is an uncharacterized protein from Escherichia coli (strain K12).